Reading from the N-terminus, the 183-residue chain is 1,6-anhydro-N-acetylmuramyl-L-alanine amidase AmpD (183 aa).

Residues 30–167 (LLVVHNISLP…APDRKTDPGP (138 aa)) enclose the N-acetylmuramoyl-L-alanine amidase domain. Histidine 34 lines the Zn(2+) pocket. Glutamate 116 serves as the catalytic Proton acceptor. Zn(2+) contacts are provided by histidine 154 and aspartate 164.

This sequence belongs to the N-acetylmuramoyl-L-alanine amidase 2 family. Zn(2+) is required as a cofactor.

Its subcellular location is the cytoplasm. It catalyses the reaction Hydrolyzes the link between N-acetylmuramoyl residues and L-amino acid residues in certain cell-wall glycopeptides.. Involved in cell wall peptidoglycan recycling. Specifically cleaves the amide bond between the lactyl group of N-acetylmuramic acid and the alpha-amino group of the L-alanine in degradation products containing an anhydro N-acetylmuramyl moiety. Is also involved in beta-lactamase induction. In Escherichia coli (strain K12), this protein is 1,6-anhydro-N-acetylmuramyl-L-alanine amidase AmpD (ampD).